We begin with the raw amino-acid sequence, 625 residues long: RecQ-mediated genome instability protein 1 (625 aa).

Methionine 1 bears the N-acetylmethionine mark. The residue at position 225 (serine 225) is a Phosphoserine. The interval leucine 257–glutamine 282 is disordered. 2 positions are modified to phosphoserine: serine 284 and serine 292. Glycyl lysine isopeptide (Lys-Gly) (interchain with G-Cter in SUMO2) cross-links involve residues lysine 334, lysine 387, and lysine 426.

It belongs to the RMI1 family. In terms of assembly, component of the RMI complex, containing at least TOP3A, RMI1 and RMI2. The RMI complex interacts with BLM. Directly interacts with RMI2 and TOP3A. May bind DHJ. Interacts (via N-terminal region) with BLM; the interaction is direct.

It is found in the nucleus. Its function is as follows. Essential component of the RMI complex, a complex that plays an important role in the processing of homologous recombination intermediates to limit DNA crossover formation in cells. Promotes TOP3A binding to double Holliday junctions (DHJ) and hence stimulates TOP3A-mediated dissolution. Required for BLM phosphorylation during mitosis. Within the BLM complex, required for BLM and TOP3A stability. The polypeptide is RecQ-mediated genome instability protein 1 (RMI1) (Homo sapiens (Human)).